Here is a 132-residue protein sequence, read N- to C-terminus: Agouti-signaling protein (132 aa).

A signal peptide spans 1–22; that stretch reads MDVTRLLLATLLVFLCFFTAYS. N39 carries N-linked (GlcNAc...) asparagine glycosylation. The interval 61–87 is disordered; sequence QISRKEAEKKRSSKKEASMKKVARPRT. The span at 63–79 shows a compositional bias: basic and acidic residues; it reads SRKEAEKKRSSKKEASM. Disulfide bonds link C93–C108, C100–C114, C107–C125, C111–C132, and C116–C123. One can recognise an Agouti domain in the interval 93 to 132; sequence CVATRDSCKSPAPACCDPCASCQCRFFRSACSCRVLSLNC.

The protein localises to the secreted. Its function is as follows. Involved in the regulation of melanogenesis. The binding of ASP to MC1R precludes alpha-MSH initiated signaling and thus blocks production of cAMP, leading to a down-regulation of eumelanogenesis (brown/black pigment) and thus increasing synthesis of pheomelanin (yellow/red pigment). The sequence is that of Agouti-signaling protein (ASIP) from Macaca nigra (Celebes black macaque).